The chain runs to 298 residues: MQTQRLRIAIQKKGRLSKECQDLLKRCGVKFNMMGERLVVHSENMPIDLLLVRDDDIPGLIMDGVVDLGVIGENELEEVGLERAARNEPSDYKKLRRLDFGDCRLSIAIDKDATYNGPQDLQGKRIATTYPQLVKRYMDKQGVTFSTCMLNGSVEVAPRAGLADAICDLVSTGATLEANGLKEAAVILRSKAVLIQCTAELSAEKQALIDRLLTRMQGVIQAKESKYIMLHAPTDRLEQIKMLLPGAEDPTVLPLSQNNNRVAVHLVSTENLFWETMEQLKELGASSILVLPIEKMME.

The protein belongs to the ATP phosphoribosyltransferase family. Long subfamily. Mg(2+) is required as a cofactor.

The protein localises to the cytoplasm. It catalyses the reaction 1-(5-phospho-beta-D-ribosyl)-ATP + diphosphate = 5-phospho-alpha-D-ribose 1-diphosphate + ATP. It participates in amino-acid biosynthesis; L-histidine biosynthesis; L-histidine from 5-phospho-alpha-D-ribose 1-diphosphate: step 1/9. Its activity is regulated as follows. Feedback inhibited by histidine. Its function is as follows. Catalyzes the condensation of ATP and 5-phosphoribose 1-diphosphate to form N'-(5'-phosphoribosyl)-ATP (PR-ATP). Has a crucial role in the pathway because the rate of histidine biosynthesis seems to be controlled primarily by regulation of HisG enzymatic activity. The protein is ATP phosphoribosyltransferase (hisG) of Photobacterium profundum (strain SS9).